Consider the following 310-residue polypeptide: Ribosomal RNA small subunit methyltransferase H (310 aa).

S-adenosyl-L-methionine-binding positions include 32–34 (GGH), D52, A83, D100, and Q107.

It belongs to the methyltransferase superfamily. RsmH family.

The protein localises to the cytoplasm. It carries out the reaction cytidine(1402) in 16S rRNA + S-adenosyl-L-methionine = N(4)-methylcytidine(1402) in 16S rRNA + S-adenosyl-L-homocysteine + H(+). Functionally, specifically methylates the N4 position of cytidine in position 1402 (C1402) of 16S rRNA. This chain is Ribosomal RNA small subunit methyltransferase H, found in Geobacillus sp. (strain WCH70).